The primary structure comprises 82 residues: U16-lycotoxin-Ls1a (82 aa).

The N-terminal stretch at 1–22 is a signal peptide; sequence MSPKVQALLLLVGLITFLAVHA. Residues 23 to 34 constitute a propeptide that is removed on maturation; the sequence is EEELSETVESER. 4 disulfides stabilise this stretch: C36–C51, C43–C56, C50–C67, and C58–C65.

It belongs to the neurotoxin 02 (plectoxin) family. 04 (U16-lycotoxin) subfamily. In terms of tissue distribution, expressed by the venom gland.

The protein localises to the secreted. The chain is U16-lycotoxin-Ls1a from Lycosa singoriensis (Wolf spider).